The following is a 199-amino-acid chain: Recombination protein RecR (199 aa).

A C4-type zinc finger spans residues Cys-56–Cys-71. One can recognise a Toprim domain in the interval Ser-79–Pro-174.

It belongs to the RecR family.

In terms of biological role, may play a role in DNA repair. It seems to be involved in an RecBC-independent recombinational process of DNA repair. It may act with RecF and RecO. This is Recombination protein RecR from Nocardioides sp. (strain ATCC BAA-499 / JS614).